The following is a 94-amino-acid chain: Small ribosomal subunit protein uS19 (94 aa).

The protein belongs to the universal ribosomal protein uS19 family.

In terms of biological role, protein S19 forms a complex with S13 that binds strongly to the 16S ribosomal RNA. The sequence is that of Small ribosomal subunit protein uS19 from Dictyoglomus thermophilum (strain ATCC 35947 / DSM 3960 / H-6-12).